A 355-amino-acid polypeptide reads, in one-letter code: S-adenosylmethionine:tRNA ribosyltransferase-isomerase (355 aa).

It belongs to the QueA family. As to quaternary structure, monomer.

It localises to the cytoplasm. It catalyses the reaction 7-aminomethyl-7-carbaguanosine(34) in tRNA + S-adenosyl-L-methionine = epoxyqueuosine(34) in tRNA + adenine + L-methionine + 2 H(+). It functions in the pathway tRNA modification; tRNA-queuosine biosynthesis. Functionally, transfers and isomerizes the ribose moiety from AdoMet to the 7-aminomethyl group of 7-deazaguanine (preQ1-tRNA) to give epoxyqueuosine (oQ-tRNA). The polypeptide is S-adenosylmethionine:tRNA ribosyltransferase-isomerase (Burkholderia ambifaria (strain ATCC BAA-244 / DSM 16087 / CCUG 44356 / LMG 19182 / AMMD) (Burkholderia cepacia (strain AMMD))).